The following is an 87-amino-acid chain: Phosphoribosyl-ATP pyrophosphatase (87 aa).

This sequence belongs to the PRA-PH family.

It localises to the cytoplasm. The catalysed reaction is 1-(5-phospho-beta-D-ribosyl)-ATP + H2O = 1-(5-phospho-beta-D-ribosyl)-5'-AMP + diphosphate + H(+). Its pathway is amino-acid biosynthesis; L-histidine biosynthesis; L-histidine from 5-phospho-alpha-D-ribose 1-diphosphate: step 2/9. The protein is Phosphoribosyl-ATP pyrophosphatase of Kocuria rhizophila (strain ATCC 9341 / DSM 348 / NBRC 103217 / DC2201).